Here is a 25-residue protein sequence, read N- to C-terminus: KLKNFAKGVAQSLLNKASCKLSGQC.

C19 and C25 are joined by a disulfide.

Belongs to the frog skin active peptide (FSAP) family. Brevinin subfamily. In terms of tissue distribution, expressed by the skin glands.

The protein resides in the secreted. Functionally, cytotoxic to cancer cells, acts via the activation of the lysosomal-mitochondrial death pathway and autophagy-like cell death. Does not show significant hemolytic activity. The sequence is that of Brevinin-2R from Pelophylax ridibundus (Marsh frog).